An 828-amino-acid polypeptide reads, in one-letter code: Periplasmic nitrate reductase (828 aa).

Positions M1 to A31 form a signal peptide, tat-type signal. Residues I39–D95 enclose the 4Fe-4S Mo/W bis-MGD-type domain. [4Fe-4S] cluster is bound by residues C46, C49, C53, and C81. Mo-bis(molybdopterin guanine dinucleotide)-binding positions include K83, Q150, N175, C179, W212–M219, S243–H247, Q262–D264, M372, Q376, N482, S508–D509, K531, D558, and T718–T727. F794 is a substrate binding site. Residues N802 and K819 each contribute to the Mo-bis(molybdopterin guanine dinucleotide) site.

This sequence belongs to the prokaryotic molybdopterin-containing oxidoreductase family. NasA/NapA/NarB subfamily. In terms of assembly, component of the periplasmic nitrate reductase NapAB complex composed of NapA and NapB. [4Fe-4S] cluster is required as a cofactor. Requires Mo-bis(molybdopterin guanine dinucleotide) as cofactor. Predicted to be exported by the Tat system. The position of the signal peptide cleavage has not been experimentally proven.

The protein resides in the periplasm. It carries out the reaction 2 Fe(II)-[cytochrome] + nitrate + 2 H(+) = 2 Fe(III)-[cytochrome] + nitrite + H2O. Catalytic subunit of the periplasmic nitrate reductase complex NapAB. Receives electrons from NapB and catalyzes the reduction of nitrate to nitrite. The protein is Periplasmic nitrate reductase of Escherichia coli O8 (strain IAI1).